The following is a 609-amino-acid chain: Adagio protein 1 (609 aa).

Residues 1 to 17 (MEWDSGSDLSADDASSL) show a composition bias toward low complexity. Residues 1–24 (MEWDSGSDLSADDASSLADDEEGG) form a disordered region. The PAS domain maps to 32–114 (IPYPVGNLLH…SEIRKCIDEG (83 aa)). Cysteine 82 carries the post-translational modification S-4a-FMN cysteine. One can recognise a PAC domain in the interval 118 to 161 (QGELLNFRKDGSPLMNRLRLTPIYGDDDTITHIIGIQFFIETDI). In terms of domain architecture, F-box spans 195 to 241 (CGLFQLSDEVVSMKILSRLTPRDVASVSSVCRRLYVLTKNEDLWRRV). 5 Kelch repeats span residues 292–342 (SRCN…SSPP), 345–392 (RWGH…SGLA), 397–445 (RSWH…PAAW), 450–501 (RLGH…TGSG), and 516–564 (RLDH…NIPG).

This sequence belongs to the ADAGIO family. Interacts with NFXL2. Interacts (via N-terminus) with GI and (via Kelch repeats) with ADO3. Component of an E3 ubiquitin ligase SCF(ADO1) complex composed of SKP1A/ASK1 (or SKP1B/ASK2), CUL1, RBX1 and ADO1. Also interacts with SKP1D/ASK4, SKP1K/ASK11, CRY1, PHYB, APRR1 and APRR5, and probably with SKP1N/ASK14 and SKP1S/ASK19. In terms of processing, may be ubiquitinated. Degraded in a proteasome-dependent manner. FMN binds covalently to cysteine after exposure to blue light and is reversed in the dark. As to expression, ubiquitously expressed with higher levels in cotyledons and leaves.

The protein resides in the nucleus. It is found in the cytoplasm. The protein operates within protein modification; protein ubiquitination. In terms of biological role, component of an E3 ubiquitin ligase complex that plays a central role in blue light-dependent circadian cycles. Acts as a blue light photoreceptor, due to the presence of FMN, that mediates light-regulated protein degradation of critical clock components by targeting them to the proteasome complex. The SCF(ADO1) E3 ubiquitin ligase complex is involved in the regulation of circadian clock-dependent processes including the transition to flowering time, hypocotyl elongation, cotyledons and leaf movement rhythms. APRR1/TOC1 and APRR5, but not 'GIGANTEA', are proteolytic substrates of this ubiquitin ligase complex. Blue light enhances cooperative stabilization of 'GIGANTEA' and ADO1/ZTL, leading to amplification and sharpening of the expression profile of APRR1/TOC1. ADO1/ZTL interacts with ADO3, preventing the interaction of ADO3 with CDF1. The chain is Adagio protein 1 (ADO1) from Arabidopsis thaliana (Mouse-ear cress).